The primary structure comprises 79 residues: Ubiquinol-cytochrome c reductase complex assembly factor 5 (79 aa).

Topologically, residues 1 to 20 are mitochondrial matrix; the sequence is MSPYSGSVRRLLDSWPGKKR. The chain crosses the membrane as a helical span at residues 21 to 43; it reads FGVYRFLPLFFLLGAGLEFSMIN. Residues 44 to 79 are Mitochondrial intermembrane-facing; that stretch reads WTVGETNFYRTFKRRQAKNYVEEQQHLQARAANNTN.

The protein belongs to the UQCC5 family. In terms of assembly, interacts with respiratory complex III components Uqcc1 and RFeSP; the interactions are probably involved in the assembly and stability of the mitochondrial ubiquinol-cytochrome c reductase complex. Interacts with sloth2; the interaction stabilizes both components. Expressed in the brain.

Its subcellular location is the mitochondrion inner membrane. It is found in the mitochondrion. Required for the assembly and stability of the mitochondrial ubiquinol-cytochrome c reductase complex (complex III (CIII) or cytochrome b-c1 complex), a multisubunit transmembrane complex that is part of the mitochondrial electron transport chain (ETC) which drives oxidative phosphorylation. The chain is Ubiquinol-cytochrome c reductase complex assembly factor 5 from Drosophila melanogaster (Fruit fly).